A 234-amino-acid chain; its full sequence is Phosphoribosylaminoimidazole-succinocarboxamide synthase (234 aa).

This sequence belongs to the SAICAR synthetase family.

It carries out the reaction 5-amino-1-(5-phospho-D-ribosyl)imidazole-4-carboxylate + L-aspartate + ATP = (2S)-2-[5-amino-1-(5-phospho-beta-D-ribosyl)imidazole-4-carboxamido]succinate + ADP + phosphate + 2 H(+). It functions in the pathway purine metabolism; IMP biosynthesis via de novo pathway; 5-amino-1-(5-phospho-D-ribosyl)imidazole-4-carboxamide from 5-amino-1-(5-phospho-D-ribosyl)imidazole-4-carboxylate: step 1/2. This chain is Phosphoribosylaminoimidazole-succinocarboxamide synthase, found in Staphylococcus carnosus (strain TM300).